A 304-amino-acid polypeptide reads, in one-letter code: Ribosomal RNA small subunit methyltransferase H (304 aa).

Residues 50–52, Asp69, Phe97, Asp113, and Gln120 each bind S-adenosyl-L-methionine; that span reads GGH.

Belongs to the methyltransferase superfamily. RsmH family.

It is found in the cytoplasm. The catalysed reaction is cytidine(1402) in 16S rRNA + S-adenosyl-L-methionine = N(4)-methylcytidine(1402) in 16S rRNA + S-adenosyl-L-homocysteine + H(+). Its function is as follows. Specifically methylates the N4 position of cytidine in position 1402 (C1402) of 16S rRNA. This Rippkaea orientalis (strain PCC 8801 / RF-1) (Cyanothece sp. (strain PCC 8801)) protein is Ribosomal RNA small subunit methyltransferase H.